The primary structure comprises 273 residues: Large ribosomal subunit protein uL2 (273 aa).

The disordered stretch occupies residues 221 to 263 (RGTAMNPVDHPHGGGEGRNFGKHPVSPWGLKTKGKKTRRNKRT). The segment covering 252–263 (TKGKKTRRNKRT) has biased composition (basic residues).

Belongs to the universal ribosomal protein uL2 family. As to quaternary structure, part of the 50S ribosomal subunit. Forms a bridge to the 30S subunit in the 70S ribosome.

Functionally, one of the primary rRNA binding proteins. Required for association of the 30S and 50S subunits to form the 70S ribosome, for tRNA binding and peptide bond formation. It has been suggested to have peptidyltransferase activity; this is somewhat controversial. Makes several contacts with the 16S rRNA in the 70S ribosome. The protein is Large ribosomal subunit protein uL2 of Buchnera aphidicola subsp. Cinara cedri (strain Cc).